Here is a 149-residue protein sequence, read N- to C-terminus: MVPVNPALPGRSYPPTPPYLVAREKIREFASAVFATNPISFDVEAARAAGHADLVGPPTFPIVVQEYTLQQLLADPEAGIDFSRVVHGDQRFTYTRAVVAGDQLTATMTVTSVKSLGAHSMVTAESMIVDAGGEHVVTAISTLVVRGDE.

Belongs to the UPF0336 family.

The sequence is that of UPF0336 protein Lxx02810 from Leifsonia xyli subsp. xyli (strain CTCB07).